Consider the following 446-residue polypeptide: tRNA-2-methylthio-N(6)-dimethylallyladenosine synthase (446 aa).

The region spanning 2–122 (KKAYVKSYGC…LPDLLRQSRE (121 aa)) is the MTTase N-terminal domain. [4Fe-4S] cluster contacts are provided by C11, C47, C85, C157, C161, and C164. The 233-residue stretch at 143 to 375 (RNRGVTGFLT…QDLLDRQRHA (233 aa)) folds into the Radical SAM core domain. A TRAM domain is found at 378 to 440 (AASVGTLTEI…SNSLFGETLE (63 aa)).

The protein belongs to the methylthiotransferase family. MiaB subfamily. In terms of assembly, monomer. [4Fe-4S] cluster is required as a cofactor.

The protein localises to the cytoplasm. It catalyses the reaction N(6)-dimethylallyladenosine(37) in tRNA + (sulfur carrier)-SH + AH2 + 2 S-adenosyl-L-methionine = 2-methylsulfanyl-N(6)-dimethylallyladenosine(37) in tRNA + (sulfur carrier)-H + 5'-deoxyadenosine + L-methionine + A + S-adenosyl-L-homocysteine + 2 H(+). In terms of biological role, catalyzes the methylthiolation of N6-(dimethylallyl)adenosine (i(6)A), leading to the formation of 2-methylthio-N6-(dimethylallyl)adenosine (ms(2)i(6)A) at position 37 in tRNAs that read codons beginning with uridine. The polypeptide is tRNA-2-methylthio-N(6)-dimethylallyladenosine synthase (Methylorubrum extorquens (strain PA1) (Methylobacterium extorquens)).